The primary structure comprises 251 residues: Tyrosine phosphatase-like protein J3 (251 aa).

Residues 26–251 (IADEYYTIVP…PVLQNSKRRE (226 aa)) form the Tyrosine-protein phosphatase domain.

Belongs to the protein-tyrosine phosphatase family.

In Microplitis demolitor (Parasitoid wasp), this protein is Tyrosine phosphatase-like protein J3 (J4).